We begin with the raw amino-acid sequence, 397 residues long: Tyrosine aminotransferase (397 aa).

Substrate is bound by residues G34, Y66, W131, and N184. At K247 the chain carries N6-(pyridoxal phosphate)lysine. R375 serves as a coordination point for substrate.

The protein belongs to the class-I pyridoxal-phosphate-dependent aminotransferase family. In terms of assembly, homodimer. Requires pyridoxal 5'-phosphate as cofactor.

The enzyme catalyses L-tyrosine + 2-oxoglutarate = 3-(4-hydroxyphenyl)pyruvate + L-glutamate. It carries out the reaction 4-methylsulfanyl-2-oxobutanoate + L-tyrosine = 3-(4-hydroxyphenyl)pyruvate + L-methionine. The catalysed reaction is an aromatic L-alpha-amino acid + 2-oxoglutarate = an aromatic oxo-acid + L-glutamate. It catalyses the reaction L-aspartate + 2-oxoglutarate = oxaloacetate + L-glutamate. The protein operates within amino-acid biosynthesis; L-methionine biosynthesis via salvage pathway; L-methionine from S-methyl-5-thio-alpha-D-ribose 1-phosphate: step 6/6. With respect to regulation, inhibited by malate and nitrotyrosine by approximately 20% at the higher concentration. At 100 uM, canaline and carboxymethoxylamine inhibit aminotransferase activity by 35 and 70%, respectively. Addition of 1.0 mM carboxymethoxylamine lead to a complete inhibition of the aminotransferase activity. Its function is as follows. catalyzes the formation of methionine from 2-keto-4-methylthiobutyrate (KMTB) primarily using aromatic amino acids (tyrosine, phenylalanine and tryptophan) or glutamate as the amino donors. Histidine, leucine, asparagine, or arginine are also functional amino donors but to a lesser extent. Can also use alpha-ketoglutarate, oxaloacetate and pyruvate as the amino acceptors. This chain is Tyrosine aminotransferase (tyrB), found in Klebsiella pneumoniae.